We begin with the raw amino-acid sequence, 582 residues long: MQRPAIIAERAPNLDPAVLAAMQSQPSGVTASDDWTAAMDRIMALTARSPDAFRQQPQANRFSAILEAVVPSRTNPTHEKVLTIVNALLDSKAIRKDEAGLIYNALLERVARYNSTNVQANLDRMGTDVKEALAQRERFHRDGNLGSLVALNAFLSTQPANVPRGQEDYTNFISALRLMVTEVPQSEVYQSGPDYFFQTSRQGLQTVNLTQAFKNLQGLWGVRAPVGDRSTLSSLLTPNSRLLLLLIAPFTNTNSLSRDSYLGHLVTLYREAIGQAQVDEQTYQEITSVSRALGQEDTGSLEATLNFLLTNRRQQVPPQYTLNAEEERILRYVQQSVSLYLMREGATPSAALDMTARNMEPSFYASNRAFINRLMDYLHRAAAMNGEYFTNAILNPHWLPPPGFYTGEFDLPEGNDGFLWDDVTDSLFSPAVIGHHGKKEAGDEGPLLDSRASSPFPSLTSLPASVNSGRTTRPRLTGESEYLNDPILFPVRDKNFPNNGIESLVDKMSRWKTYAQERREWEERQPRPVRPPRQRWQRRKKGAHAGDEGSDDSADDSSVLDLGGSGNPFAHLRPQGCIGSLY.

The tract at residues 1–114 (MQRPAIIAER…ALLERVARYN (114 aa)) is peripentonal hexon-tethering domain. The interval 146–259 (GSLVALNAFL…FTNTNSLSRD (114 aa)) is binding to hexon-linking protein. Position 233 is a phosphoserine; by host (serine 233). Threonine 282 is modified (phosphothreonine; by host). The interval 437–479 (GKKEAGDEGPLLDSRASSPFPSLTSLPASVNSGRTTRPRLTGE) is disordered. Residues 451 to 471 (RASSPFPSLTSLPASVNSGRT) show a composition bias toward polar residues. 2 positions are modified to phosphoserine; by host: serine 458 and serine 465. Residue tyrosine 482 is modified to Phosphotyrosine; by host. Serine 503 carries the post-translational modification Phosphoserine; by host. Positions 517 to 526 (ERREWEERQP) are enriched in basic and acidic residues. Residues 517 to 582 (ERREWEERQP…RPQGCIGSLY (66 aa)) form a disordered region. Residues 530 to 543 (RPPRQRWQRRKKGA) are compositionally biased toward basic residues. A propeptide spanning residues 566 to 582 (GNPFAHLRPQGCIGSLY) is cleaved from the precursor.

Belongs to the adenoviridae hexon-linking protein IIIa family. As to quaternary structure, interacts with hexon proteins; this interaction tethers the peripentonal hexons to hexons situated in the facet. Interacts with the penton protein (via N-terminus). Interacts with packaging protein 3; this interaction is required to promote correct genome packaging. Post-translationally, cleaved near the C-terminus by the viral protease during virion maturation to form the mature protein.

It is found in the virion. Its subcellular location is the host nucleus. Its function is as follows. Structural component of the virion that acts as a cement protein on the capsid exterior which mediates the interactions between the hexons, including the peripentonal hexons, and reaches all the way to the penton vertices. Two hexon linking proteins IIIa, one from each facet, stabilize the unique edge interface between a pair of facets. As the virus enters the host cell, hexon linking proteins IIIa are shed concomitant with virion acidification in the endosome. During virus assembly, seems to play a role in the serotype specificity of the packaging of viral DNA via its interaction with packaging protein 3. The protein is Pre-hexon-linking protein IIIa of Human adenovirus A serotype 12 (HAdV-12).